The following is a 738-amino-acid chain: Catalase-peroxidase (738 aa).

Residues 1–16 (MSENHDAIVTDAKTEE) show a composition bias toward basic and acidic residues. Positions 1–37 (MSENHDAIVTDAKTEEAGGCPVAHGRAPHPTQGGGNR) are disordered. Residues 108-231 (WHSAGTYRIS…LGAVQMGLIY (124 aa)) constitute a cross-link (tryptophyl-tyrosyl-methioninium (Trp-Tyr) (with M-257)). His109 acts as the Proton acceptor in catalysis. Positions 231 to 257 (YVNPEGPNGNPDPIAAARDIRETFGRM) form a cross-link, tryptophyl-tyrosyl-methioninium (Tyr-Met) (with W-108). Residue His272 participates in heme b binding.

It belongs to the peroxidase family. Peroxidase/catalase subfamily. In terms of assembly, homodimer or homotetramer. The cofactor is heme b. Formation of the three residue Trp-Tyr-Met cross-link is important for the catalase, but not the peroxidase activity of the enzyme.

The enzyme catalyses H2O2 + AH2 = A + 2 H2O. It catalyses the reaction 2 H2O2 = O2 + 2 H2O. Bifunctional enzyme with both catalase and broad-spectrum peroxidase activity. This is Catalase-peroxidase from Streptomyces ambofaciens.